Consider the following 643-residue polypeptide: Nucleolar GTP-binding protein 1 (643 aa).

In terms of domain architecture, OBG-type G spans Arg168–Leu340. Residues Gly174–Ser181, Asp220–Ile224, and Asn288–Asp291 contribute to the GTP site. The disordered stretch occupies residues Gly568 to Arg643. Residues Met594–Ala622 show a composition bias toward basic and acidic residues.

It belongs to the TRAFAC class OBG-HflX-like GTPase superfamily. OBG GTPase family. NOG subfamily.

It localises to the nucleus. Its subcellular location is the nucleolus. In terms of biological role, involved in the biogenesis of the 60S ribosomal subunit. This Kluyveromyces lactis (strain ATCC 8585 / CBS 2359 / DSM 70799 / NBRC 1267 / NRRL Y-1140 / WM37) (Yeast) protein is Nucleolar GTP-binding protein 1 (NOG1).